We begin with the raw amino-acid sequence, 95 residues long: uncharacterized protein (95 aa).

This is an uncharacterized protein from Bacillus anthracis.